The following is a 351-amino-acid chain: Nicotinate-nucleotide--dimethylbenzimidazole phosphoribosyltransferase (351 aa).

Glu317 serves as the catalytic Proton acceptor.

It belongs to the CobT family.

The catalysed reaction is 5,6-dimethylbenzimidazole + nicotinate beta-D-ribonucleotide = alpha-ribazole 5'-phosphate + nicotinate + H(+). It participates in nucleoside biosynthesis; alpha-ribazole biosynthesis; alpha-ribazole from 5,6-dimethylbenzimidazole: step 1/2. Its function is as follows. Catalyzes the synthesis of alpha-ribazole-5'-phosphate from nicotinate mononucleotide (NAMN) and 5,6-dimethylbenzimidazole (DMB). The polypeptide is Nicotinate-nucleotide--dimethylbenzimidazole phosphoribosyltransferase (Pseudomonas aeruginosa (strain UCBPP-PA14)).